Consider the following 286-residue polypeptide: uncharacterized protein (286 aa).

It belongs to the NmrA-type oxidoreductase family.

This is an uncharacterized protein from Bacillus subtilis (strain 168).